Consider the following 191-residue polypeptide: NAD(P)H-quinone oxidoreductase subunit L, chloroplastic (191 aa).

The transit peptide at 1–46 (MSRCGSLGLYAPNALPSLSLKPRSVKSPFCITSHTKPNDTLLHNVN) directs the protein to the chloroplast. The next 3 membrane-spanning stretches (helical) occupy residues 61–81 (TILA…ALAI), 93–113 (VVLD…PIIM), and 129–149 (YLQF…APFL).

This sequence belongs to the NDH complex subunit L family. As to quaternary structure, part of the chloroplast NDH complex, composed of a mixture of chloroplast and nucleus encoded subunits. Component of the NDH subcomplex A, at least composed of ndhH, ndhI, ndhJ, ndhK, ndhL, ndhM, ndhN and ndhO.

The protein localises to the plastid. The protein resides in the chloroplast thylakoid membrane. It carries out the reaction a plastoquinone + NADH + (n+1) H(+)(in) = a plastoquinol + NAD(+) + n H(+)(out). The enzyme catalyses a plastoquinone + NADPH + (n+1) H(+)(in) = a plastoquinol + NADP(+) + n H(+)(out). Its function is as follows. NDH shuttles electrons from NAD(P)H:plastoquinone, via FMN and iron-sulfur (Fe-S) centers, to quinones in the photosynthetic chain and possibly in a chloroplast respiratory chain. The immediate electron acceptor for the enzyme in this species is believed to be plastoquinone. Couples the redox reaction to proton translocation, and thus conserves the redox energy in a proton gradient. The chain is NAD(P)H-quinone oxidoreductase subunit L, chloroplastic from Arabidopsis thaliana (Mouse-ear cress).